The sequence spans 251 residues: MRTPLIAGNWKLHKTIAESLAMVDELKPLVAGSRGVEIVVAPVFTALKSVSFALNGSDIGLAAQDCFWEEQGAFTGEVSPAQLRDAGCSHVIIGHSERRQLFGETDEGVNRKARAAVAVGLTAIICVGETMEERESRATFTVVGRQVTAALAGFLSHEFSRIVIAYEPVWAIGTGKTATDQQAQEVHCYIRNLVTMSISQAIADSLRILYGGSVKPDNIRGLMAQPDIDGALIGGASLKAASFAEMVNFRG.

Position 9 to 11 (9 to 11 (NWK)) interacts with substrate. Residue His95 is the Electrophile of the active site. Catalysis depends on Glu167, which acts as the Proton acceptor. Residues Gly173, Ser213, and 234–235 (GG) contribute to the substrate site.

This sequence belongs to the triosephosphate isomerase family. As to quaternary structure, homodimer.

The protein resides in the cytoplasm. The catalysed reaction is D-glyceraldehyde 3-phosphate = dihydroxyacetone phosphate. The protein operates within carbohydrate biosynthesis; gluconeogenesis. It functions in the pathway carbohydrate degradation; glycolysis; D-glyceraldehyde 3-phosphate from glycerone phosphate: step 1/1. Functionally, involved in the gluconeogenesis. Catalyzes stereospecifically the conversion of dihydroxyacetone phosphate (DHAP) to D-glyceraldehyde-3-phosphate (G3P). This Pelobacter propionicus (strain DSM 2379 / NBRC 103807 / OttBd1) protein is Triosephosphate isomerase.